A 570-amino-acid chain; its full sequence is Putative pyruvate decarboxylase C3G9.11c (570 aa).

Residues D30 and H119 each contribute to the pyruvate site. Thiamine diphosphate is bound by residues T396 and 419–421 (GSI). A Mg(2+)-binding site is contributed by D451. Residues 452 to 453 (GS) and 478 to 483 (NKGYTI) each bind thiamine diphosphate. Mg(2+) contacts are provided by N478 and G480. Residue E484 coordinates pyruvate.

Belongs to the TPP enzyme family. As to quaternary structure, homotetramer. Requires Mg(2+) as cofactor. Thiamine diphosphate serves as cofactor.

The protein resides in the cytoplasm. It localises to the nucleus. The enzyme catalyses a 2-oxocarboxylate + H(+) = an aldehyde + CO2. The catalysed reaction is pyruvate + H(+) = acetaldehyde + CO2. This Schizosaccharomyces pombe (strain 972 / ATCC 24843) (Fission yeast) protein is Putative pyruvate decarboxylase C3G9.11c.